Reading from the N-terminus, the 152-residue chain is Deoxyuridine 5'-triphosphate nucleotidohydrolase (152 aa).

Substrate is bound by residues Arg-71–Gly-73, Asn-84, Leu-88–Asp-90, and Met-98.

It belongs to the dUTPase family. The cofactor is Mg(2+).

The enzyme catalyses dUTP + H2O = dUMP + diphosphate + H(+). The protein operates within pyrimidine metabolism; dUMP biosynthesis; dUMP from dCTP (dUTP route): step 2/2. Its function is as follows. This enzyme is involved in nucleotide metabolism: it produces dUMP, the immediate precursor of thymidine nucleotides and it decreases the intracellular concentration of dUTP so that uracil cannot be incorporated into DNA. The chain is Deoxyuridine 5'-triphosphate nucleotidohydrolase from Shewanella piezotolerans (strain WP3 / JCM 13877).